Reading from the N-terminus, the 263-residue chain is Acyl-[acyl-carrier-protein]--UDP-N-acetylglucosamine O-acyltransferase (263 aa).

The protein belongs to the transferase hexapeptide repeat family. LpxA subfamily. As to quaternary structure, homotrimer.

Its subcellular location is the cytoplasm. The catalysed reaction is a (3R)-hydroxyacyl-[ACP] + UDP-N-acetyl-alpha-D-glucosamine = a UDP-3-O-[(3R)-3-hydroxyacyl]-N-acetyl-alpha-D-glucosamine + holo-[ACP]. It participates in glycolipid biosynthesis; lipid IV(A) biosynthesis; lipid IV(A) from (3R)-3-hydroxytetradecanoyl-[acyl-carrier-protein] and UDP-N-acetyl-alpha-D-glucosamine: step 1/6. Its function is as follows. Involved in the biosynthesis of lipid A, a phosphorylated glycolipid that anchors the lipopolysaccharide to the outer membrane of the cell. This chain is Acyl-[acyl-carrier-protein]--UDP-N-acetylglucosamine O-acyltransferase, found in Stenotrophomonas maltophilia (strain R551-3).